The primary structure comprises 241 residues: 1-(5-phosphoribosyl)-5-[(5-phosphoribosylamino)methylideneamino] imidazole-4-carboxamide isomerase (241 aa).

Asp10 acts as the Proton acceptor in catalysis. Catalysis depends on Asp129, which acts as the Proton donor.

The protein belongs to the HisA/HisF family.

It is found in the cytoplasm. It catalyses the reaction 1-(5-phospho-beta-D-ribosyl)-5-[(5-phospho-beta-D-ribosylamino)methylideneamino]imidazole-4-carboxamide = 5-[(5-phospho-1-deoxy-D-ribulos-1-ylimino)methylamino]-1-(5-phospho-beta-D-ribosyl)imidazole-4-carboxamide. Its pathway is amino-acid biosynthesis; L-histidine biosynthesis; L-histidine from 5-phospho-alpha-D-ribose 1-diphosphate: step 4/9. In Salinispora arenicola (strain CNS-205), this protein is 1-(5-phosphoribosyl)-5-[(5-phosphoribosylamino)methylideneamino] imidazole-4-carboxamide isomerase.